Here is a 359-residue protein sequence, read N- to C-terminus: Fructose-bisphosphate aldolase (359 aa).

Serine 50 contacts D-glyceraldehyde 3-phosphate. Aspartate 83 (proton donor) is an active-site residue. The Zn(2+) site is built by histidine 84, aspartate 105, glutamate 142, and histidine 198. Glycine 199 lines the dihydroxyacetone phosphate pocket. Histidine 232 is a Zn(2+) binding site. Dihydroxyacetone phosphate is bound by residues 233 to 235 (GSS) and 275 to 278 (NIDT).

Zn(2+) is required as a cofactor.

The catalysed reaction is beta-D-fructose 1,6-bisphosphate = D-glyceraldehyde 3-phosphate + dihydroxyacetone phosphate. It functions in the pathway carbohydrate degradation; glycolysis; D-glyceraldehyde 3-phosphate and glycerone phosphate from D-glucose: step 4/4. Catalyzes the aldol condensation of dihydroxyacetone phosphate (DHAP or glycerone-phosphate) with glyceraldehyde 3-phosphate (G3P) to form fructose 1,6-bisphosphate (FBP) in gluconeogenesis and the reverse reaction in glycolysis. This is Fructose-bisphosphate aldolase from Nostoc sp. (strain PCC 7120 / SAG 25.82 / UTEX 2576).